The primary structure comprises 78 residues: Small ribosomal subunit protein uS17 (78 aa).

Belongs to the universal ribosomal protein uS17 family. As to quaternary structure, part of the 30S ribosomal subunit.

One of the primary rRNA binding proteins, it binds specifically to the 5'-end of 16S ribosomal RNA. This chain is Small ribosomal subunit protein uS17, found in Rhizobium meliloti (strain 1021) (Ensifer meliloti).